The sequence spans 329 residues: MNAAISATARYLPEGVLSNLDLERMLDTNDEWIRSRTGISERRILRDPKKATSYMCGEVASQLLRKRGLAAEELELIIVATMTPDMMFPSTACLVQDIIGAKNAWAFDINAACSGFLYALNTASQFIKAGTHKNVMVIGGDKMSSIIDYTDRSTAILFGDGAGGVILEAAESEGFGVLDARMYSDGTNGKDHLLMKGGGSLHPATHDTVDQHLHYIYQDGRMVFKSAVTSMADVAAEIMERNGLTSDDVSWLVPHQANQRIISATAERMGIDESKVISNVGRYGNTTAGTIPICLSELDDGGHLEHGSNLVLVSFGAGYTWGGVYVKWQ.

Catalysis depends on residues C113 and H255. Positions 256-260 (QANQR) are ACP-binding. N285 is a catalytic residue.

Belongs to the thiolase-like superfamily. FabH family. In terms of assembly, homodimer.

The protein localises to the cytoplasm. The catalysed reaction is malonyl-[ACP] + acetyl-CoA + H(+) = 3-oxobutanoyl-[ACP] + CO2 + CoA. Its pathway is lipid metabolism; fatty acid biosynthesis. In terms of biological role, catalyzes the condensation reaction of fatty acid synthesis by the addition to an acyl acceptor of two carbons from malonyl-ACP. Catalyzes the first condensation reaction which initiates fatty acid synthesis and may therefore play a role in governing the total rate of fatty acid production. Possesses both acetoacetyl-ACP synthase and acetyl transacylase activities. Its substrate specificity determines the biosynthesis of branched-chain and/or straight-chain of fatty acids. The protein is Beta-ketoacyl-[acyl-carrier-protein] synthase III of Chlorobium luteolum (strain DSM 273 / BCRC 81028 / 2530) (Pelodictyon luteolum).